The following is a 347-amino-acid chain: Large ribosomal subunit protein uL10 (347 aa).

The disordered stretch occupies residues 310-347 (ATVAAPAAEEEKKEEEPEEEEEDHAEEDGMAGLGALFG). Residues 325-338 (EPEEEEEDHAEEDG) are compositionally biased toward acidic residues.

Belongs to the universal ribosomal protein uL10 family. Part of the 50S ribosomal subunit. Forms part of the ribosomal stalk which helps the ribosome interact with GTP-bound translation factors. Forms a heptameric L10(L12)2(L12)2(L12)2 complex, where L10 forms an elongated spine to which the L12 dimers bind in a sequential fashion.

Functionally, forms part of the ribosomal stalk, playing a central role in the interaction of the ribosome with GTP-bound translation factors. The sequence is that of Large ribosomal subunit protein uL10 from Methanosarcina mazei (strain ATCC BAA-159 / DSM 3647 / Goe1 / Go1 / JCM 11833 / OCM 88) (Methanosarcina frisia).